The following is a 304-amino-acid chain: Aspartate carbamoyltransferase catalytic subunit (304 aa).

The carbamoyl phosphate site is built by arginine 49 and threonine 50. Position 77 (lysine 77) interacts with L-aspartate. Residues arginine 99, histidine 127, and glutamine 130 each contribute to the carbamoyl phosphate site. Residues arginine 160 and arginine 211 each coordinate L-aspartate. Positions 252 and 253 each coordinate carbamoyl phosphate.

This sequence belongs to the aspartate/ornithine carbamoyltransferase superfamily. ATCase family. Heterododecamer (2C3:3R2) of six catalytic PyrB chains organized as two trimers (C3), and six regulatory PyrI chains organized as three dimers (R2).

It carries out the reaction carbamoyl phosphate + L-aspartate = N-carbamoyl-L-aspartate + phosphate + H(+). It functions in the pathway pyrimidine metabolism; UMP biosynthesis via de novo pathway; (S)-dihydroorotate from bicarbonate: step 2/3. Catalyzes the condensation of carbamoyl phosphate and aspartate to form carbamoyl aspartate and inorganic phosphate, the committed step in the de novo pyrimidine nucleotide biosynthesis pathway. This Bacillus cereus (strain G9842) protein is Aspartate carbamoyltransferase catalytic subunit.